Consider the following 391-residue polypeptide: MEEYTDSGEDKNVYSDDDNDYFTASTQNNRTSKNTDSSPLDPKRLAEEMSKIQPKHEKEKKKLFESYYKTRENEENGADNHCFKFNKIYTDLKFDYSVLVSGFGSKIQLIETFVKEFCTDGPSLHFKGYLPNLSVRDLLYKITFSLFGIDKKIASPIAHCNFIKSIFESGSMDINKMRQTFGGRFDYGIPDHVYVVIHNIDGYSLRNETSQLTLALLATIPQVHMIATIDAIGAQLLWDNRMLSNFNWTTYSMPTYQPYDLELSYDTNTKGGGGGGGIGSKSSSGTNKNLQPSTILTVLKSLTEISTDIFKELLTYLIKKKKNKMEFKILFDICRDAFLVSSESGLKTQLREFIDHKIIIQKEIGDTTFLIIPIETSVMEIILSQLENSIS.

Residues 1–43 (MEEYTDSGEDKNVYSDDDNDYFTASTQNNRTSKNTDSSPLDPK) are disordered. Residues 22–38 (FTASTQNNRTSKNTDSS) show a composition bias toward polar residues.

This sequence belongs to the ORC2 family. In terms of assembly, ORC is composed of six subunits.

The protein resides in the nucleus. Functionally, component of the origin recognition complex (ORC) that binds origins of replication. DNA-binding is ATP-dependent, however specific DNA sequences that define origins of replication have not been identified so far. ORC is required to assemble the pre-replication complex necessary to initiate DNA replication. The protein is Origin recognition complex subunit 2 (orcB) of Dictyostelium discoideum (Social amoeba).